The sequence spans 303 residues: MISAKSVKELRERTGAGMMDCKKALTETDGDIEKAVEVLREKGLAAAAKKSGRVAAEGLVKTYISEDKKSGAIVELNCETDFVAANEDFIAFADALAKIATSTSATTVEELVNEKFDSEATIQEALTGLIARLGENMTVRRFVKFAVDNGVVKSYIHGGGRIGVLVEVACDVESPAVEEVAKELCMQIAAANPLFLSKEEVDQDSIEKEKEIYRVQALNEGKPEKIVEKMVMGRIQKYYKEVCLLEQLWVKDGDKTITKFIDEKAKEAGSAIKVNRFVRFERGEGIEKVEENFAEEVAKQLGK.

An involved in Mg(2+) ion dislocation from EF-Tu region spans residues Thr80–Val83.

It belongs to the EF-Ts family.

It localises to the cytoplasm. In terms of biological role, associates with the EF-Tu.GDP complex and induces the exchange of GDP to GTP. It remains bound to the aminoacyl-tRNA.EF-Tu.GTP complex up to the GTP hydrolysis stage on the ribosome. This chain is Elongation factor Ts, found in Clostridium botulinum (strain Eklund 17B / Type B).